Consider the following 330-residue polypeptide: Phytanoyl-CoA hydroxylase-interacting protein (330 aa).

Residues Thr-6–Tyr-115 enclose the Fibronectin type-III domain. 2 N-linked (GlcNAc...) asparagine glycosylation sites follow: Asn-14 and Asn-325.

This sequence belongs to the PHYHIP family. As to quaternary structure, interacts with PHYH and ADGRB1.

Functionally, its interaction with PHYH suggests a role in the development of the central system. This is Phytanoyl-CoA hydroxylase-interacting protein (PHYHIP) from Bos taurus (Bovine).